The primary structure comprises 385 residues: Actin-2 (385 aa).

It belongs to the actin family. ARP1 subfamily.

Its subcellular location is the cytoplasm. It localises to the cytoskeleton. This Pneumocystis carinii protein is Actin-2.